The primary structure comprises 300 residues: Putative S-adenosyl-L-methionine-dependent methyltransferase Mkms_0379 (300 aa).

Residues aspartate 128 and 157–158 (DL) contribute to the S-adenosyl-L-methionine site.

This sequence belongs to the UPF0677 family.

Exhibits S-adenosyl-L-methionine-dependent methyltransferase activity. The polypeptide is Putative S-adenosyl-L-methionine-dependent methyltransferase Mkms_0379 (Mycobacterium sp. (strain KMS)).